The sequence spans 244 residues: 7-cyano-7-deazaguanine synthase (244 aa).

F14–V24 is an ATP binding site. 4 residues coordinate Zn(2+): C202, C217, C220, and C223.

The protein belongs to the QueC family. Requires Zn(2+) as cofactor.

The catalysed reaction is 7-carboxy-7-deazaguanine + NH4(+) + ATP = 7-cyano-7-deazaguanine + ADP + phosphate + H2O + H(+). It participates in purine metabolism; 7-cyano-7-deazaguanine biosynthesis. Its function is as follows. Catalyzes the ATP-dependent conversion of 7-carboxy-7-deazaguanine (CDG) to 7-cyano-7-deazaguanine (preQ(0)). This Burkholderia thailandensis (strain ATCC 700388 / DSM 13276 / CCUG 48851 / CIP 106301 / E264) protein is 7-cyano-7-deazaguanine synthase.